A 431-amino-acid polypeptide reads, in one-letter code: Adenylosuccinate synthetase (431 aa).

GTP is bound by residues 13–19 (GDEGKGK) and 41–43 (GHT). Asp14 functions as the Proton acceptor in the catalytic mechanism. Positions 14 and 41 each coordinate Mg(2+). IMP contacts are provided by residues 14–17 (DEGK), 39–42 (NAGH), Thr130, Arg144, Gln225, Thr240, and Arg304. His42 acts as the Proton donor in catalysis. 300–306 (ATTGRAR) is a binding site for substrate. GTP is bound by residues Arg306, 332–334 (KLD), and 414–416 (STG).

It belongs to the adenylosuccinate synthetase family. In terms of assembly, homodimer. Mg(2+) serves as cofactor.

Its subcellular location is the cytoplasm. It catalyses the reaction IMP + L-aspartate + GTP = N(6)-(1,2-dicarboxyethyl)-AMP + GDP + phosphate + 2 H(+). It participates in purine metabolism; AMP biosynthesis via de novo pathway; AMP from IMP: step 1/2. Plays an important role in the de novo pathway of purine nucleotide biosynthesis. Catalyzes the first committed step in the biosynthesis of AMP from IMP. The protein is Adenylosuccinate synthetase of Chromohalobacter salexigens (strain ATCC BAA-138 / DSM 3043 / CIP 106854 / NCIMB 13768 / 1H11).